The chain runs to 874 residues: Protein translocase subunit SecA (874 aa).

ATP is bound by residues Gln87, 105–109, and Asp512; that span reads GEGKT. Positions 859, 861, 870, and 871 each coordinate Zn(2+).

It belongs to the SecA family. As to quaternary structure, monomer and homodimer. Part of the essential Sec protein translocation apparatus which comprises SecA, SecYEG and auxiliary proteins SecDF-YajC and YidC. Zn(2+) is required as a cofactor.

It is found in the cell inner membrane. The protein resides in the cytoplasm. It carries out the reaction ATP + H2O + cellular proteinSide 1 = ADP + phosphate + cellular proteinSide 2.. Its function is as follows. Part of the Sec protein translocase complex. Interacts with the SecYEG preprotein conducting channel. Has a central role in coupling the hydrolysis of ATP to the transfer of proteins into and across the cell membrane, serving both as a receptor for the preprotein-SecB complex and as an ATP-driven molecular motor driving the stepwise translocation of polypeptide chains across the membrane. In Buchnera aphidicola subsp. Schizaphis graminum (strain Sg), this protein is Protein translocase subunit SecA.